The primary structure comprises 155 residues: Small ribosomal subunit protein uS17 (155 aa).

This sequence belongs to the universal ribosomal protein uS17 family. As to quaternary structure, component of the small ribosomal subunit. Mature ribosomes consist of a small (40S) and a large (60S) subunit. The 40S subunit contains about 32 different proteins and 1 molecule of RNA (18S). The 60S subunit contains 45 different proteins and 3 molecules of RNA (25S, 5.8S and 5S).

The protein resides in the cytoplasm. In terms of biological role, component of the ribosome, a large ribonucleoprotein complex responsible for the synthesis of proteins in the cell. The small ribosomal subunit (SSU) binds messenger RNAs (mRNAs) and translates the encoded message by selecting cognate aminoacyl-transfer RNA (tRNA) molecules. The large subunit (LSU) contains the ribosomal catalytic site termed the peptidyl transferase center (PTC), which catalyzes the formation of peptide bonds, thereby polymerizing the amino acids delivered by tRNAs into a polypeptide chain. The nascent polypeptides leave the ribosome through a tunnel in the LSU and interact with protein factors that function in enzymatic processing, targeting, and the membrane insertion of nascent chains at the exit of the ribosomal tunnel. The sequence is that of Small ribosomal subunit protein uS17 from Candida albicans (strain SC5314 / ATCC MYA-2876) (Yeast).